The chain runs to 480 residues: Probable GH family 25 lysozyme 3 (480 aa).

Positions 1–20 (MNKLILSILSVLLIVSIASA) are cleaved as a signal peptide. In terms of domain architecture, Ch-type lysozyme spans 21–231 (GNGIDISSGT…STTSSSATSS (211 aa)). Active-site residues include Asp-25, Asp-114, and Glu-116. The span at 219–472 (SGSSTTSSSA…SSGSGNYTSG (254 aa)) shows a compositional bias: low complexity. A disordered region spans residues 219-480 (SGSSTTSSSA…SGSGNGAFLF (262 aa)). Asn-423, Asn-428, Asn-437, Asn-446, and Asn-468 each carry an N-linked (GlcNAc...) asparagine glycan.

It belongs to the glycosyl hydrolase 25 family.

It is found in the secreted. It carries out the reaction Hydrolysis of (1-&gt;4)-beta-linkages between N-acetylmuramic acid and N-acetyl-D-glucosamine residues in a peptidoglycan and between N-acetyl-D-glucosamine residues in chitodextrins.. This Dictyostelium discoideum (Social amoeba) protein is Probable GH family 25 lysozyme 3.